The sequence spans 417 residues: NADH-quinone oxidoreductase subunit D (417 aa).

This sequence belongs to the complex I 49 kDa subunit family. In terms of assembly, NDH-1 is composed of 14 different subunits. Subunits NuoB, C, D, E, F, and G constitute the peripheral sector of the complex.

The protein resides in the cell inner membrane. It catalyses the reaction a quinone + NADH + 5 H(+)(in) = a quinol + NAD(+) + 4 H(+)(out). Functionally, NDH-1 shuttles electrons from NADH, via FMN and iron-sulfur (Fe-S) centers, to quinones in the respiratory chain. The immediate electron acceptor for the enzyme in this species is believed to be ubiquinone. Couples the redox reaction to proton translocation (for every two electrons transferred, four hydrogen ions are translocated across the cytoplasmic membrane), and thus conserves the redox energy in a proton gradient. The polypeptide is NADH-quinone oxidoreductase subunit D (Cupriavidus necator (strain ATCC 17699 / DSM 428 / KCTC 22496 / NCIMB 10442 / H16 / Stanier 337) (Ralstonia eutropha)).